We begin with the raw amino-acid sequence, 232 residues long: Octanoyltransferase (232 aa).

The region spanning 44–219 (EHTGDELWVV…QLARQFGLVL (176 aa)) is the BPL/LPL catalytic domain. Substrate-binding positions include 83-90 (RGGQVTYH), 150-152 (ALG), and 163-165 (GLS). Residue cysteine 181 is the Acyl-thioester intermediate of the active site.

The protein belongs to the LipB family.

The protein resides in the cytoplasm. The enzyme catalyses octanoyl-[ACP] + L-lysyl-[protein] = N(6)-octanoyl-L-lysyl-[protein] + holo-[ACP] + H(+). It functions in the pathway protein modification; protein lipoylation via endogenous pathway; protein N(6)-(lipoyl)lysine from octanoyl-[acyl-carrier-protein]: step 1/2. Functionally, catalyzes the transfer of endogenously produced octanoic acid from octanoyl-acyl-carrier-protein onto the lipoyl domains of lipoate-dependent enzymes. Lipoyl-ACP can also act as a substrate although octanoyl-ACP is likely to be the physiological substrate. The sequence is that of Octanoyltransferase from Xanthomonas campestris pv. campestris (strain 8004).